The sequence spans 714 residues: Phosphate acetyltransferase (714 aa).

The tract at residues 390–714 (AFRYQLTELA…TAIQASQQQQ (325 aa)) is phosphate acetyltransferase.

The protein in the N-terminal section; belongs to the CobB/CobQ family. This sequence in the C-terminal section; belongs to the phosphate acetyltransferase and butyryltransferase family. Homohexamer.

It is found in the cytoplasm. The catalysed reaction is acetyl-CoA + phosphate = acetyl phosphate + CoA. It carries out the reaction propanoyl-CoA + phosphate = propanoyl phosphate + CoA. It functions in the pathway metabolic intermediate biosynthesis; acetyl-CoA biosynthesis; acetyl-CoA from acetate: step 2/2. Allosterically inhibited by NADH. Functionally, involved in acetate metabolism. Catalyzes the reversible interconversion of acetyl-CoA and acetyl phosphate. The direction of the overall reaction changes depending on growth conditions. Required for acetate recapture but not for acetate excretion when this organism is grown on ethanolamine (EA); is unable to complement an eutD deletion during growth on EA. Works with proprionate kinase PduW to capture exogenous propionate and regenerate propionyl-CoA during degradation of propionate and 1,2-propanediol (1,2-PD). In Salmonella typhimurium (strain LT2 / SGSC1412 / ATCC 700720), this protein is Phosphate acetyltransferase (pta).